Here is a 192-residue protein sequence, read N- to C-terminus: Elongation factor P (192 aa).

It belongs to the elongation factor P family.

It localises to the cytoplasm. It participates in protein biosynthesis; polypeptide chain elongation. Involved in peptide bond synthesis. Stimulates efficient translation and peptide-bond synthesis on native or reconstituted 70S ribosomes in vitro. Probably functions indirectly by altering the affinity of the ribosome for aminoacyl-tRNA, thus increasing their reactivity as acceptors for peptidyl transferase. This Borreliella afzelii (strain PKo) (Borrelia afzelii) protein is Elongation factor P.